The chain runs to 404 residues: Snake venom metalloproteinase H5 (404 aa).

The signal sequence occupies residues Phe-1–Ser-6. Positions Ser-7–Lys-177 are excised as a propeptide. Positions Thr-184 to Ser-379 constitute a Peptidase M12B domain. 3 disulfides stabilise this stretch: Cys-295–Cys-374, Cys-336–Cys-358, and Cys-338–Cys-341. His-320 contacts Zn(2+). Glu-321 is an active-site residue. Zn(2+) contacts are provided by His-324 and His-330. The propeptide occupies Ser-379–Ala-404. Residues Val-385 to Ala-404 form a disordered region. Over residues Pro-394–Ala-404 the composition is skewed to acidic residues.

As to quaternary structure, monomer. Requires Zn(2+) as cofactor. As to expression, expressed by the venom gland.

Its subcellular location is the secreted. This probable venom zinc protease is not hemorrhagic when 3 ug are injected onto the back skin of guinea pig. The chain is Snake venom metalloproteinase H5 from Deinagkistrodon acutus (Hundred-pace snake).